Reading from the N-terminus, the 320-residue chain is Mitochondrial oxaloacetate transport protein (320 aa).

Solcar repeat units lie at residues 21-114 (LGPV…IRRT), 126-218 (NKLA…AKRM), and 227-313 (EGMI…TNKL). 6 helical membrane passes run 26–47 (GFLS…FEVI), 91–111 (GTAY…YEPI), 129–145 (AINV…GALF), 197–217 (AILR…WAKR), 233–253 (LTAS…FDTV), and 285–306 (LYKG…CLTF).

Belongs to the mitochondrial carrier (TC 2.A.29) family.

Its subcellular location is the mitochondrion inner membrane. It carries out the reaction a dicarboxylate(in) + sulfate(out) = a dicarboxylate(out) + sulfate(in). The catalysed reaction is (2S)-2-isopropylmalate(in) + sulfate(out) = (2S)-2-isopropylmalate(out) + sulfate(in). It catalyses the reaction (2R,3S)-3-isopropylmalate(in) + sulfate(out) = (2R,3S)-3-isopropylmalate(out) + sulfate(in). The enzyme catalyses malonate(in) + sulfate(out) = malonate(out) + sulfate(in). It carries out the reaction oxaloacetate(in) + sulfate(out) = oxaloacetate(out) + sulfate(in). The catalysed reaction is thiosulfate(in) + sulfate(out) = thiosulfate(out) + sulfate(in). Antiporter that exchanges dicarboxylates and sulfur oxoanions across the inner membrane of mitochondria. Exports alpha-isopropylmalate from mitochondrial matrix to the cytosol, where it serves as a precursor for leucine biosynthesis. In Schizosaccharomyces pombe (strain 972 / ATCC 24843) (Fission yeast), this protein is Mitochondrial oxaloacetate transport protein (oac1).